The sequence spans 747 residues: Myotubularin-related protein 12 (747 aa).

Residues 205–643 enclose the Myotubularin phosphatase domain; sequence FDTLKDWCWE…PEIKVWAQRY (439 aa). The tract at residues 449–558 is interaction with MTM1; that stretch reads VPVFLLFLDC…KGQRKGMRFK (110 aa). 3 positions are modified to phosphoserine: Ser564, Ser601, and Ser716.

It belongs to the protein-tyrosine phosphatase family. Non-receptor class myotubularin subfamily. As to quaternary structure, heterodimer with lipid phosphatase MTM1. Heterodimer with lipid phosphatase MTMR2. Expressed in skeletal muscles (at protein level). Ubiquitous with prominent expression in brain, heart, kidney, placenta, and lung.

The protein resides in the cytoplasm. It is found in the sarcoplasmic reticulum. The protein localises to the myofibril. It localises to the sarcomere. Its function is as follows. Acts as an adapter for the myotubularin-related phosphatases. Regulates phosphatase MTM1 protein stability and possibly its intracellular location. By stabilizing MTM1 protein levels, required for skeletal muscle maintenance but not for myogenesis. This is Myotubularin-related protein 12 (MTMR12) from Homo sapiens (Human).